The primary structure comprises 575 residues: 3-hydroxy-3-methylglutaryl-coenzyme A reductase 1 (575 aa).

Over residues Met1–Ala13 the composition is skewed to basic residues. A disordered region spans residues Met1–Lys25. The next 2 helical transmembrane spans lie at Ala29–Ala49 and Glu73–Ile93. Residues Gln97–Glu160 form a linker region. A glycan (N-linked (GlcNAc...) asparagine) is linked at Asn132. The tract at residues Asp161–Ser575 is catalytic. Glu254 (charge relay system) is an active-site residue. Asn318 carries N-linked (GlcNAc...) asparagine glycosylation. Residues Lys386 and Asp462 each act as charge relay system in the active site. The helical transmembrane segment at Leu531 to Ile551 threads the bilayer. The active-site Proton donor is His560. N-linked (GlcNAc...) asparagine glycosylation is present at Asn564.

Belongs to the HMG-CoA reductase family.

It is found in the endoplasmic reticulum membrane. The protein localises to the mitochondrion membrane. Its subcellular location is the plastid membrane. It carries out the reaction (R)-mevalonate + 2 NADP(+) + CoA = (3S)-3-hydroxy-3-methylglutaryl-CoA + 2 NADPH + 2 H(+). It participates in metabolic intermediate biosynthesis; (R)-mevalonate biosynthesis; (R)-mevalonate from acetyl-CoA: step 3/3. In terms of biological role, catalyzes the synthesis of mevalonate. The specific precursor of all isoprenoid compounds present in plants. This chain is 3-hydroxy-3-methylglutaryl-coenzyme A reductase 1 (HMGR1), found in Hevea brasiliensis (Para rubber tree).